We begin with the raw amino-acid sequence, 2909 residues long: Micronemal protein 15 (2909 aa).

Positions 1 to 29 (MVFRATREPFRLPLVAAFIALFLLKGVTC) are cleaved as a signal peptide. Asn-512, Asn-563, Asn-792, Asn-813, Asn-986, Asn-1007, Asn-1057, Asn-1142, Asn-1319, Asn-1395, and Asn-1713 each carry an N-linked (GlcNAc...) asparagine glycan. The region spanning 1755–1811 (TAIVGEWGEWSACTGTCFSQWWTPKRTRTRLVLAELSHSQIPSVSETATCLDLPPCG) is the TSP type-1 1 domain. A disordered region spans residues 1937–2073 (RRKGIMSRRR…RSQARNQTPD (137 aa)). The segment covering 1967-1977 (SEQSGKASQNG) has biased composition (polar residues). A glycan (N-linked (GlcNAc...) asparagine) is linked at Asn-1976. Residues 1978–1988 (SRRHRASRKQK) are compositionally biased toward basic residues. The span at 2004–2016 (GESTLHGTGTNAY) shows a compositional bias: polar residues. The segment covering 2049–2065 (KARRARRGAGRFRKSRS) has biased composition (basic residues). A glycan (N-linked (GlcNAc...) asparagine) is linked at Asn-2333. The 66-residue stretch at 2484 to 2549 (TCDYTEWSEW…EKCDWMPVCP (66 aa)) folds into the TSP type-1 2 domain. 3 cysteine pairs are disulfide-bonded: Cys-2485–Cys-2528, Cys-2496–Cys-2500, and Cys-2542–Cys-2548. A disordered region spans residues 2552 to 2587 (EGEEEDDATGGVEPRGEPIVPPWSPERPTDENNQAM). N-linked (GlcNAc...) asparagine glycosylation occurs at Asn-2706. The chain crosses the membrane as a helical span at residues 2709–2729 (TWVICLLLGVGGGICFVLSCV). N-linked (GlcNAc...) asparagine glycosylation is found at Asn-2751, Asn-2768, and Asn-2793. The tract at residues 2759-2846 (ESHKLRRQGN…IGQTSPTQQR (88 aa)) is disordered. Positions 2801–2815 (PEEEPWQFEDRDEEP) are enriched in acidic residues. A compositionally biased stretch (polar residues) spans 2837–2846 (IGQTSPTQQR).

Component of a complex, at least composed of cysteine repeat modular protein A (CRMPa), cysteine repeat modular protein B (CRMPb), micronemal protein 15 (MIC15) and thrombospondin type 1 domain-containing protein (TSP1).

The protein localises to the membrane. Its function is as follows. Required for rhoptry secretion. Plays a role in host cell invasion. The polypeptide is Micronemal protein 15 (Toxoplasma gondii).